We begin with the raw amino-acid sequence, 226 residues long: Purine nucleoside phosphorylase Cj1217c (226 aa).

Positions 58, 93, and 109 each coordinate Zn(2+).

This sequence belongs to the purine nucleoside phosphorylase YfiH/LACC1 family. As to quaternary structure, homodimer. It depends on Cu(2+) as a cofactor. Zn(2+) is required as a cofactor.

The enzyme catalyses adenosine + phosphate = alpha-D-ribose 1-phosphate + adenine. It carries out the reaction S-methyl-5'-thioadenosine + phosphate = 5-(methylsulfanyl)-alpha-D-ribose 1-phosphate + adenine. The catalysed reaction is inosine + phosphate = alpha-D-ribose 1-phosphate + hypoxanthine. It catalyses the reaction adenosine + H2O + H(+) = inosine + NH4(+). Functionally, purine nucleoside enzyme that catalyzes the phosphorolysis of adenosine and inosine nucleosides, yielding D-ribose 1-phosphate and the respective free bases, adenine and hypoxanthine. Also catalyzes the phosphorolysis of S-methyl-5'-thioadenosine into adenine and S-methyl-5-thio-alpha-D-ribose 1-phosphate. Also has adenosine deaminase activity. This chain is Purine nucleoside phosphorylase Cj1217c, found in Campylobacter jejuni subsp. jejuni serotype O:2 (strain ATCC 700819 / NCTC 11168).